A 68-amino-acid polypeptide reads, in one-letter code: DNA-directed RNA polymerase subunit Rpo10 (68 aa).

Residues cysteine 7, cysteine 10, cysteine 44, and cysteine 45 each coordinate Zn(2+).

This sequence belongs to the archaeal Rpo10/eukaryotic RPB10 RNA polymerase subunit family. In terms of assembly, part of the RNA polymerase complex. Zn(2+) is required as a cofactor.

The protein localises to the cytoplasm. The enzyme catalyses RNA(n) + a ribonucleoside 5'-triphosphate = RNA(n+1) + diphosphate. Functionally, DNA-dependent RNA polymerase (RNAP) catalyzes the transcription of DNA into RNA using the four ribonucleoside triphosphates as substrates. This is DNA-directed RNA polymerase subunit Rpo10 from Methanococcus maripaludis (strain C5 / ATCC BAA-1333).